The chain runs to 209 residues: Thymidine kinase (209 aa).

ATP-binding positions include S9–T16 and D88–Q91. Residue E89 is the Proton acceptor of the active site.

Belongs to the thymidine kinase family. As to quaternary structure, homotetramer.

Its subcellular location is the cytoplasm. It catalyses the reaction thymidine + ATP = dTMP + ADP + H(+). This chain is Thymidine kinase, found in Xanthomonas campestris pv. campestris (strain 8004).